The chain runs to 370 residues: 3-isopropylmalate dehydrogenase (370 aa).

77-90 contributes to the NAD(+) binding site; sequence GPKWDSVPYEVRPE. Residues Arg-97, Arg-107, Arg-135, and Asp-226 each contribute to the substrate site. Positions 226, 250, and 254 each coordinate Mg(2+). 290–302 serves as a coordination point for NAD(+); that stretch reads GSAPDIAGKGIAN.

The protein belongs to the isocitrate and isopropylmalate dehydrogenases family. LeuB type 1 subfamily. As to quaternary structure, homodimer. Mg(2+) serves as cofactor. The cofactor is Mn(2+).

The protein localises to the cytoplasm. The catalysed reaction is (2R,3S)-3-isopropylmalate + NAD(+) = 4-methyl-2-oxopentanoate + CO2 + NADH. It participates in amino-acid biosynthesis; L-leucine biosynthesis; L-leucine from 3-methyl-2-oxobutanoate: step 3/4. Functionally, catalyzes the oxidation of 3-carboxy-2-hydroxy-4-methylpentanoate (3-isopropylmalate) to 3-carboxy-4-methyl-2-oxopentanoate. The product decarboxylates to 4-methyl-2 oxopentanoate. In Brucella suis biovar 1 (strain 1330), this protein is 3-isopropylmalate dehydrogenase.